A 975-amino-acid chain; its full sequence is Glycine dehydrogenase (decarboxylating) (975 aa).

Lys723 carries the post-translational modification N6-(pyridoxal phosphate)lysine.

The protein belongs to the GcvP family. The glycine cleavage system is composed of four proteins: P, T, L and H. Pyridoxal 5'-phosphate serves as cofactor.

The catalysed reaction is N(6)-[(R)-lipoyl]-L-lysyl-[glycine-cleavage complex H protein] + glycine + H(+) = N(6)-[(R)-S(8)-aminomethyldihydrolipoyl]-L-lysyl-[glycine-cleavage complex H protein] + CO2. Functionally, the glycine cleavage system catalyzes the degradation of glycine. The P protein binds the alpha-amino group of glycine through its pyridoxal phosphate cofactor; CO(2) is released and the remaining methylamine moiety is then transferred to the lipoamide cofactor of the H protein. The protein is Glycine dehydrogenase (decarboxylating) of Burkholderia thailandensis (strain ATCC 700388 / DSM 13276 / CCUG 48851 / CIP 106301 / E264).